Here is a 224-residue protein sequence, read N- to C-terminus: Peroxiredoxin-6 (224 aa).

One can recognise a Thioredoxin domain in the interval Leu5 to Leu169. Residues Asp31–Pro40 are required and sufficient for targeting to lysosomes and lamellar bodies. Thr44 is subject to Phosphothreonine. The active-site Cysteine sulfenic acid (-SOH) intermediate; for peroxidase activity is Cys47. Lys63 carries the N6-acetyllysine modification. Position 89 is a phosphotyrosine (Tyr89). Asp140 serves as the catalytic For phospholipase activity. Thr177 carries the post-translational modification Phosphothreonine; by MAPK. Lys209 carries the N6-acetyllysine; alternate modification. N6-succinyllysine; alternate is present on Lys209.

This sequence belongs to the peroxiredoxin family. Prx6 subfamily. As to quaternary structure, homodimer. Interacts with GSTP1; mediates PRDX6 glutathionylation and regeneration. Interacts with APEX1. Interacts with STH. May interact with FAM168B. May interact with HTR2A. Post-translationally, irreversibly inactivated by overoxidation of Cys-47 to sulfinic acid (Cys-SO(2)H) and sulfonic acid (Cys-SO(3)H) forms upon oxidative stress. In terms of processing, phosphorylation at Thr-177 by MAP kinases increases the phospholipase activity of the enzyme. The phosphorylated form exhibits a greater lysophosphatidylcholine acyltransferase activity compared to the non-phosphorylated form.

The protein resides in the cytoplasm. It is found in the lysosome. It catalyses the reaction a hydroperoxide + 2 glutathione = an alcohol + glutathione disulfide + H2O. The enzyme catalyses a 1,2-diacyl-sn-glycero-3-phosphocholine + H2O = a 1-acyl-sn-glycero-3-phosphocholine + a fatty acid + H(+). It carries out the reaction a 1-acyl-sn-glycero-3-phosphocholine + an acyl-CoA = a 1,2-diacyl-sn-glycero-3-phosphocholine + CoA. The catalysed reaction is 1-hexadecanoyl-sn-glycero-3-phosphocholine + hexadecanoyl-CoA = 1,2-dihexadecanoyl-sn-glycero-3-phosphocholine + CoA. It catalyses the reaction 1,2-dihexadecanoyl-sn-glycero-3-phosphocholine + H2O = 1-hexadecanoyl-sn-glycero-3-phosphocholine + hexadecanoate + H(+). MJ33 or lithium;[(2R)-1-hexadecoxy-3-(2,2,2-trifluoroethoxy)propan-2-yl] methyl phosphate inhibits its phospholipase A2 activity. CI-976 or 2,2-Dimethyl-N-(2,4,6-trimethoxyphenyl)dodecanamide inhibits its lysophosphatidylcholine acyltransferase activity. Functionally, thiol-specific peroxidase that catalyzes the reduction of hydrogen peroxide and organic hydroperoxides to water and alcohols, respectively. Can reduce H(2)O(2) and short chain organic, fatty acid, and phospholipid hydroperoxides. Also has phospholipase activity, can therefore either reduce the oxidized sn-2 fatty acyl group of phospholipids (peroxidase activity) or hydrolyze the sn-2 ester bond of phospholipids (phospholipase activity). These activities are dependent on binding to phospholipids at acidic pH and to oxidized phospholipds at cytosolic pH. Plays a role in cell protection against oxidative stress by detoxifying peroxides and in phospholipid homeostasis. Exhibits acyl-CoA-dependent lysophospholipid acyltransferase which mediates the conversion of lysophosphatidylcholine (1-acyl-sn-glycero-3-phosphocholine or LPC) into phosphatidylcholine (1,2-diacyl-sn-glycero-3-phosphocholine or PC). Shows a clear preference for LPC as the lysophospholipid and for palmitoyl CoA as the fatty acyl substrate. The protein is Peroxiredoxin-6 (PRDX6) of Homo sapiens (Human).